The chain runs to 634 residues: Coilin (634 aa).

3 disordered regions span residues 87–135 (VSPA…IAEN), 149–276 (PGPS…KLSQ), and 342–361 (GAKS…DSTL). Residues 152–181 (SVQSKLLTNKGTPKAPETQTEVSNMSANIE) are compositionally biased toward polar residues. Composition is skewed to basic and acidic residues over residues 223-234 (TLKEGKMSESKN) and 251-272 (KENE…KIPD).

This sequence belongs to the coilin family. In egg chambers expressed in the follicle cells, nurse cells and oocyte. Expressed in the larval brain, salivary glands, fat bodies and in the somatic hub cells at the tip of the testis. Expressed in the spermatogonia and spermatocytes, and in the adult ejaculatory duct (at protein level). Expressed in the adult Malpighian tubules.

It localises to the nucleus. It is found in the nucleoplasm. The protein localises to the cajal body. Its subcellular location is the chromosome. The protein resides in the centromere. It localises to the cytoplasm. It is found in the cytoskeleton. The protein localises to the spindle. Component of nuclear coiled bodies, also known as Cajal bodies or CBs, which are involved in the modification and assembly of nucleoplasmic snRNPs. Required for Cajal body formation. The polypeptide is Coilin (Drosophila melanogaster (Fruit fly)).